The chain runs to 89 residues: DNA-directed RNA polymerase subunit omega (89 aa).

Belongs to the RNA polymerase subunit omega family. In terms of assembly, the RNAP catalytic core consists of 2 alpha, 1 beta, 1 beta' and 1 omega subunit. When a sigma factor is associated with the core the holoenzyme is formed, which can initiate transcription.

It carries out the reaction RNA(n) + a ribonucleoside 5'-triphosphate = RNA(n+1) + diphosphate. Its function is as follows. Promotes RNA polymerase assembly. Latches the N- and C-terminal regions of the beta' subunit thereby facilitating its interaction with the beta and alpha subunits. The protein is DNA-directed RNA polymerase subunit omega of Clavibacter michiganensis subsp. michiganensis (strain NCPPB 382).